The primary structure comprises 65 residues: uncharacterized protein (65 aa).

This is an uncharacterized protein from Thermoproteus tenax (TTV1).